Reading from the N-terminus, the 648-residue chain is EF-hand domain-containing protein 1 (648 aa).

The tract at residues Met1–Met45 is required for its localization in the mitotic spindle and interaction with alpha-tubulin. DM10 domains follow at residues Asp93–Gly198, Asp239–Phe359, and Asp416–Ala520. One can recognise an EF-hand domain in the interval Ser582–Pro617.

As to quaternary structure, microtubule inner protein component of sperm flagellar doublet microtubules. Interacts with the C-terminus of CACNA1E. Interacts with alpha-tubulin. In terms of tissue distribution, expressed in adult brain including hippocampus, cerebellum, cerebral cortex, thalamus, hypothalamus, amygdala and upper brainstem. Expressed in soma and dentrites of pyramidal neurons of the hippocampal CA1 region, pyramidal neurons of the cerebral cortex and Purkinje cells of cerebellum. Highly expressed in testis, trachea, and oviduct, moderately in lung, and slightly in brain. Highly expressed in sperm flagella and tracheal cilia (at protein level).

The protein resides in the cytoplasm. It localises to the cytoskeleton. The protein localises to the cilium axoneme. It is found in the flagellum axoneme. Its subcellular location is the microtubule organizing center. The protein resides in the centrosome. It localises to the spindle. The protein localises to the spindle pole. Microtubule inner protein (MIP) part of the dynein-decorated doublet microtubules (DMTs) in cilia axoneme, which is required for motile cilia beating. Microtubule-associated protein which regulates cell division and neuronal migration during cortical development. Necessary for radial and tangential cell migration during brain development, possibly acting as a regulator of cell morphology and process formation during migration. May enhance calcium influx through CACNA1E and stimulate programmed cell death. Overexpression of EFHC1 in hippocampal primary culture neurons induced apoptosis. This chain is EF-hand domain-containing protein 1 (Efhc1), found in Mus musculus (Mouse).